A 143-amino-acid polypeptide reads, in one-letter code: Large ribosomal subunit protein uL11 (143 aa).

The protein belongs to the universal ribosomal protein uL11 family. Part of the ribosomal stalk of the 50S ribosomal subunit. Interacts with L10 and the large rRNA to form the base of the stalk. L10 forms an elongated spine to which L12 dimers bind in a sequential fashion forming a multimeric L10(L12)X complex. In terms of processing, one or more lysine residues are methylated.

Forms part of the ribosomal stalk which helps the ribosome interact with GTP-bound translation factors. This chain is Large ribosomal subunit protein uL11, found in Delftia acidovorans (strain DSM 14801 / SPH-1).